A 1377-amino-acid chain; its full sequence is MAQTHSFNGRKRVRKFFGKIPEVAEMPNLIEVQKASYDQFLMVEEPSGGRPDEGLQAVFKSVFPIQDFSGASMLEFVRYEFDPPKFDVDECRQRDLTYSAPLKVTLRLIVFDIDEDTGAKSIKDIKEQDVYMGDMPLMTDNGTFIVNGTERVIVSQMHRSPGVFFDHDKGKTHSSGKLLFAARVIPYRGSWLDIEFDSKDIVYARIDRRRKLPATTLLMALGMDGEEILSTFYKTVTYTRDGDNWRIPYSAERFKGMKIISDLVDADTGEVVLEAGKKLTARAAKQLAEKGLKAIKATEDDLFGSYLAEDVVNYATGEIYLEAGDEIDEKVLKTLIDTGETEINVLDIDHVNIGAYIRNTLAVDKNESRQEALFDIYRVMRPGEPPTMDSAEAMFHSLFFDSERYDLSAVGRVKMNMRLDLDAEDTVRVLRKEDILAVVKMLVELRDGRGEIDDIDNLGNRRVRSVGELMENQYRVGLLRMERAIKERMSSIEIDTVMPQDLINAKPAAAAVREFFGSSQLSQFMDQTNPLSEITHKRRLSALGPGGLTRERAGFEVRDVHPTHYGRICPIETPEGPNIGLINSLATFARVNKYGFIESPYRKVVDGKVTNDVVYLSAMEEAKHSIAQANVELDEQGGFVDEFVICRHAGEVMMAPRENVDLMDVSPKQLVSVAAALIPFLENDDANRALMGSNMQRQAVPLVRAEAPFVGTGMEPIVARDSGAAIAARRGGIVDQVDATRIVIRATEELDPSKSGVDIYRLQKFQRSNQSTCINQRPLVRVGDRIHKGDIIADGPSTDLGDLALGRNVLVAFMPWNGYNYEDSILLSEKIVSDDVFTSIHIEEFEVAARDTKLGPEEITRDIPNVSEEALKNLDEAGIVYIGAEVHPGDILVGKITPKGESPMTPEEKLLRAIFGEKASDVRDTSMRMPPGTYGTVVEVRVFNRHGVEKDERAMAIEREEIERLAKDRDDEQAILDRNVYGRLADMIDGKVAAAGPKGFKKGTTITRELMTEYPRSQWWQFAVEDEKLQGELEALRSQYDDSKKLLEARFMDKVEKVQRGDEMPPGVMKMVKVFVAVKRKIQPGDKMAGRHGNKGVVSRILPVEDMPFLEDGTHADIVLNPLGVPSRMNVGQILETHLGWACAGMGKKIGELLDVYRKTANIEPLRQTLEHIYPDNDRNEPVRSYDDDAILMLANQVKRGVSIATPVFDGAVEADINAMLTDAGLATSGQSTLYDGRTGEPFDRQVTMGYIYMLKLHHLVDDKIHARSIGPYSLVTQQPLGGKAQFGGQRFGEMEVWALEAYGAAYTLQEMLTVKSDDVAGRTKVYEAIVRGDDTFEAGIPESFNVLVKEMRSLGLNVELDDTREAEQPALPDAAE.

This sequence belongs to the RNA polymerase beta chain family. As to quaternary structure, the RNAP catalytic core consists of 2 alpha, 1 beta, 1 beta' and 1 omega subunit. When a sigma factor is associated with the core the holoenzyme is formed, which can initiate transcription.

The enzyme catalyses RNA(n) + a ribonucleoside 5'-triphosphate = RNA(n+1) + diphosphate. DNA-dependent RNA polymerase catalyzes the transcription of DNA into RNA using the four ribonucleoside triphosphates as substrates. This Brucella canis (strain ATCC 23365 / NCTC 10854 / RM-666) protein is DNA-directed RNA polymerase subunit beta.